Here is a 259-residue protein sequence, read N- to C-terminus: Protein TILLER ANGLE CONTROL 1 (259 aa).

The IGT motif motif lies at Gly56–Thr62. Disordered regions lie at residues Glu96 to His123, Ser206 to Ala226, and Gly239 to Ala259. A compositionally biased stretch (low complexity) spans Ala109–Pro119.

It belongs to the TAC family. As to expression, expressed in the basal part of seedlings.

In terms of biological role, involved in the regulation of tiller growth angle. Promotes horizontal shoot growth. TAC1 and LAZY1 play opposite functions in the regulation of tiller growth angle. The polypeptide is Protein TILLER ANGLE CONTROL 1 (Oryza sativa subsp. indica (Rice)).